Reading from the N-terminus, the 101-residue chain is Large ribosomal subunit protein uL24c (101 aa).

Belongs to the universal ribosomal protein uL24 family. In terms of assembly, part of the 50S ribosomal subunit.

The protein resides in the plastid. The protein localises to the chloroplast. One of two assembly initiator proteins, it binds directly to the 5'-end of the 23S rRNA, where it nucleates assembly of the 50S subunit. In Guillardia theta (Cryptophyte), this protein is Large ribosomal subunit protein uL24c (rpl24).